Reading from the N-terminus, the 211-residue chain is Bifunctional transcriptional activator/DNA repair enzyme AdaA (211 aa).

The active-site Nucleophile; methyl group acceptor from methylphosphotriester is the cysteine 54. Zn(2+) contacts are provided by cysteine 54, cysteine 58, cysteine 85, and cysteine 88. The 99-residue stretch at 102-200 (DLITEYIDKN…GQTPARFRQM (99 aa)) folds into the HTH araC/xylS-type domain. Positions 119-140 (ESLADICHGSPYHMHRTFKKIK) form a DNA-binding region, H-T-H motif.

The cofactor is Zn(2+).

The enzyme catalyses (2'-deoxyribonucleoside 5'-methylphosphotriester)-DNA + L-cysteinyl-[protein] = 2'-deoxyribonucleotide-DNA + S-methyl-L-cysteinyl-[protein] + H(+). Is involved in the adaptive response to alkylation damage in DNA caused by alkylating agents. Repairs the methylphosphotriester lesions in DNA by a direct and irreversible transfer of the methyl group to one of its own cysteine residues. Its function is as follows. The methylation of AdaA by methylphosphotriesters in DNA leads to its activation as a transcriptional regulator that activates the transcription of the ada operon which consists of adaA and adaB, and of the adjacent gene alkA. The sequence is that of Bifunctional transcriptional activator/DNA repair enzyme AdaA (adaA) from Bacillus subtilis (strain 168).